We begin with the raw amino-acid sequence, 704 residues long: Capsule polysaccharide modification protein LipA (704 aa).

It is found in the cell inner membrane. Functionally, involved in the phospholipid modification of the capsular polysaccharide, a strong requirement for its translocation to the cell surface. The chain is Capsule polysaccharide modification protein LipA (lipA) from Neisseria meningitidis serogroup A / serotype 4A (strain DSM 15465 / Z2491).